The following is a 671-amino-acid chain: Protein cereblon (671 aa).

Residues 1 to 11 show a composition bias toward acidic residues; it reads MDGEEAADIDE. Disordered regions lie at residues 1–59, 104–130, and 150–187; these read MDGE…VDGD, LTGTTTPTPTAPENQAENAPEIEPAQP, and GHNVLNPGDDARSISSRHSGSDMSLDSPGSEDDSDAEA. Low complexity-rich tracts occupy residues 39–51 and 105–115; these read QQQQQMPQTSSGE and TGTTTPTPTAP. Residues 162 to 173 are compositionally biased toward polar residues; that stretch reads SISSRHSGSDMS. Positions 309–537 constitute a Lon N-terminal domain; the sequence is RMLIFMHQHI…IIGSTLKQES (229 aa). The 110-residue stretch at 536–645 folds into the CULT domain; the sequence is ESLFYCRYCN…LAGSSVRIGK (110 aa). Residues Cys-541, Cys-544, Cys-610, and Cys-613 each contribute to the Zn(2+) site.

It belongs to the CRBN family. In terms of assembly, likely a component of a DCX (DDB1-CUL4-X-box) protein ligase complex. May interact with pic/DDB1. Ubiquitinated.

The protein resides in the nucleus. The protein operates within protein modification; protein ubiquitination. Its function is as follows. Substrate recognition component of a DCX (DDB1-CUL4-X-box) E3 protein ligase complex that mediates the ubiquitination and subsequent proteasomal degradation of target proteins. Has an essential role in mediating growth by negatively regulating insulin signaling. It also has a role in maintaining presynaptic function in the neuromuscular junction synapses of third-instar larvae. The protein is Protein cereblon of Drosophila grimshawi (Hawaiian fruit fly).